The following is a 397-amino-acid chain: Troponin T, skeletal muscle (397 aa).

Over residues 1-16 the composition is skewed to acidic residues; it reads MSDDEEYTSSEEEEVV. Disordered stretches follow at residues 1–148, 234–261, and 294–397; these read MSDD…NFTI, ERQK…YPPK, and DSNE…EEEE. 3 stretches are compositionally biased toward basic and acidic residues: residues 37–77, 84–129, and 136–148; these read EFIK…LKEK, TRAE…EKKR, and MKDK…NFTI. 2 stretches are compositionally biased toward basic and acidic residues: residues 294 to 307 and 319 to 329; these read DSNE…KEQY and FGERPGKKAGE. Residues 331 to 397 are compositionally biased toward acidic residues; that stretch reads ETPEGEEDAK…EEEEEEEEEE (67 aa).

This sequence belongs to the troponin T family. Some glutamate residues are polyglycylated by TTLL3B. This modification occurs exclusively on glutamate residues and results in polyglycine chains on the gamma-carboxyl group. As to expression, isoform 3 is expressed in the hypoderm. Isoform 8 is expressed in the dorsal vessel. Isoform 6 is expressed in adult TDT muscle and isoform 9 in adult IFM, flight and jump muscles.

Functionally, troponin T is the tropomyosin-binding subunit of troponin, the thin filament regulatory complex which confers calcium-sensitivity to striated muscle actomyosin ATPase activity. The sequence is that of Troponin T, skeletal muscle (up) from Drosophila melanogaster (Fruit fly).